The primary structure comprises 174 residues: Bacterial proteasome activator (174 aa).

The interval 153–174 (QGALPPGVGKSGQHGHGTGQYL) is disordered. The segment covering 161–174 (GKSGQHGHGTGQYL) has biased composition (gly residues). Residues 172–174 (QYL) carry the HbYX motif motif.

Belongs to the Bpa family. As to quaternary structure, forms a homooligomeric, either hexameric or heptameric, ring-like structure which stacks co-axially with the proteasomal alpha-rings.

In terms of biological role, interacts with the core proteasome alpha-subunit (PrcA) through its C-terminal hydrophobic-tyrosine-X motif (HbYX motif). Interaction of Bpa with the proteasome stimulates proteasomal peptidase and casein degradation activity, which suggests Bpa could play a role in the removal of non-native or damaged proteins by influencing the conformation of the proteasome complex upon interaction. In Mycobacterium bovis (strain ATCC BAA-935 / AF2122/97), this protein is Bacterial proteasome activator (bpa).